The following is a 559-amino-acid chain: MAAQGFLLIASFLLILLVLAKPLGSGLARLIAAVPLPGVAGVERILWRTLGITDHEMNWRQYLLALLTLNLLGLGILFCLLFWQEWLPLNPQRLPGLSRDLALNTAVSFVTNTNWQAYSGESTLSYFSQMAGLTVQNFLSAATGIAVVFALIRAFTRQNVHTLGNAWQDLVRITLWILFPVALIIALFFIQQGVPQNLSAYQPITTLEGAKQLLPMGPVASQEAIKMLGTNGGGFFNANSSHPFENPTALTNLAQMLAIFLIPAALCFAFGEAAGDRRQGRALLWAMSFIFVVCVAVVMWAEVQGNPHLLAAGADSSVNMEGKETRFGVLASSLFAVVTTAASCGAVNAMHDSFTALGGMVPMWLMQIGEVVFGGVGSGLYGMLLFVLLAVFIAGLMIGRTPEYLGKKIDVREMKMTALAILVTPMLVLLGSALAMMTDAGRSAMLNPGPHGFSEVLYAVSSAANNNGSAFAGLSANSPFWNCLLAFCMFVGRFGVIIPVMAIAGSLVSKKVQPASQGTLATHGALFIGLLIGTVLLVGALTFIPALALGPVAEHFSLP.

13 consecutive transmembrane segments (helical) span residues 5–25 (GFLLIASFLLILLVLAKPLGS), 27–47 (LARLIAAVPLPGVAGVERILW), 63–83 (LLALLTLNLLGLGILFCLLFW), 132–152 (GLTVQNFLSAATGIAVVFALI), 170–190 (LVRITLWILFPVALIIALFFI), 253–273 (LAQMLAIFLIPAALCFAFGEA), 283–303 (LLWAMSFIFVVCVAVVMWAEV), 327–347 (FGVLASSLFAVVTTAASCGAV), 356–376 (ALGGMVPMWLMQIGEVVFGGV), 379–399 (GLYGMLLFVLLAVFIAGLMIG), 416–436 (MTALAILVTPMLVLLGSALAM), 484–504 (LLAFCMFVGRFGVIIPVMAIA), and 524–544 (GALFIGLLIGTVLLVGALTFI).

The protein belongs to the KdpA family. In terms of assembly, the system is composed of three essential subunits: KdpA, KdpB and KdpC.

It is found in the cell inner membrane. Functionally, part of the high-affinity ATP-driven potassium transport (or Kdp) system, which catalyzes the hydrolysis of ATP coupled with the electrogenic transport of potassium into the cytoplasm. This subunit binds the periplasmic potassium ions and delivers the ions to the membrane domain of KdpB through an intramembrane tunnel. In Salmonella dublin (strain CT_02021853), this protein is Potassium-transporting ATPase potassium-binding subunit.